We begin with the raw amino-acid sequence, 320 residues long: Ribosome biogenesis protein BRX1 homolog 2 (320 aa).

A disordered region spans residues 1-40; it reads MGRKRKHSETEAPAPVKKSDEPAPDRPKRTLLGWKDKSEG. Over residues 17-40 the composition is skewed to basic and acidic residues; sequence KKSDEPAPDRPKRTLLGWKDKSEG. Residues 57-260 form the Brix domain; the sequence is EKVLVTCSRR…PIKIFAGSFG (204 aa). Positions 297 to 320 are disordered; that stretch reads RKKMHELSNPLEPDEFADMWKDDE. Acidic residues predominate over residues 308–320; the sequence is EPDEFADMWKDDE.

It belongs to the BRX1 family. As to expression, expressed in roots, rosette leaves, stems, flowers, siliques and seeds.

The protein localises to the nucleus. It localises to the nucleolus. In terms of biological role, involved in pre-rRNA processing and required for biogenesis of the large (60S) ribosomal subunit. Required for proper development. The sequence is that of Ribosome biogenesis protein BRX1 homolog 2 from Arabidopsis thaliana (Mouse-ear cress).